Reading from the N-terminus, the 236-residue chain is Probable transmembrane ascorbate ferrireductase 4 (236 aa).

One can recognise a Cytochrome b561 domain in the interval 14–210 (FARLSGLVVA…LGCIVITAAI (197 aa)). A run of 3 helical transmembrane segments spans residues 17-37 (LSGL…PNLG), 42-62 (TLHP…AILI), and 76-96 (VHLW…WTKF). Heme b contacts are provided by His-44, His-77, and His-110. 3 helical membrane passes run 112–132 (WMGL…FMSF), 144–164 (TFLP…IATA), and 191–211 (VNGL…AAIL). His-149 lines the heme b pocket.

In terms of assembly, homodimer. The cofactor is heme b.

Its subcellular location is the membrane. It catalyses the reaction Fe(3+)(out) + L-ascorbate(in) = monodehydro-L-ascorbate radical(in) + Fe(2+)(out) + H(+). In terms of biological role, two-heme-containing cytochrome. May catalyze ascorbate-dependent trans-membrane ferric-chelate reduction. In Arabidopsis thaliana (Mouse-ear cress), this protein is Probable transmembrane ascorbate ferrireductase 4 (CYB561D).